A 189-amino-acid chain; its full sequence is Density-regulated protein homolog (189 aa).

The SUI1 domain maps to 105 to 172 (ICVSRAARGK…DLFDVIPEKW (68 aa)).

This sequence belongs to the DENR family. Interacts with MCTS1.

In terms of biological role, regulates translation as part of a complex with MCTS1. Specifically required for translational re-initiation in mRNAs containing upstream open reading frames (uORFs). Not required for standard translational initiation. Regulates expression of a subset of gene products including mbc, InR and EcR. The sequence is that of Density-regulated protein homolog from Drosophila melanogaster (Fruit fly).